Consider the following 173-residue polypeptide: Ferric citrate uptake sigma factor FecI (173 aa).

The short motif at 40-52 (DIAQDTFLRVMVS) is the Polymerase core binding element. A DNA-binding region (H-T-H motif) is located at residues 139 to 158 (YSEIAHKLGVSISSVKKYVA).

This sequence belongs to the sigma-70 factor family. ECF subfamily. Interacts with FecR (via cytoplasmic N-terminus).

Functionally, sigma factors are initiation factors that promote the attachment of RNA polymerase to specific initiation sites and are then released. This sigma factor regulates transcriptional activation of the fecABCDE operon which mediates ferric citrate transport. This is Ferric citrate uptake sigma factor FecI (fecI) from Escherichia coli (strain K12).